The following is a 159-amino-acid chain: Putative 4-hydroxy-4-methyl-2-oxoglutarate aldolase (159 aa).

Substrate contacts are provided by residues 78–81 and R100; that span reads GDVI. D101 contributes to the a divalent metal cation binding site.

This sequence belongs to the class II aldolase/RraA-like family. As to quaternary structure, homotrimer. It depends on a divalent metal cation as a cofactor.

The enzyme catalyses 4-hydroxy-4-methyl-2-oxoglutarate = 2 pyruvate. It carries out the reaction oxaloacetate + H(+) = pyruvate + CO2. Catalyzes the aldol cleavage of 4-hydroxy-4-methyl-2-oxoglutarate (HMG) into 2 molecules of pyruvate. Also contains a secondary oxaloacetate (OAA) decarboxylase activity due to the common pyruvate enolate transition state formed following C-C bond cleavage in the retro-aldol and decarboxylation reactions. This chain is Putative 4-hydroxy-4-methyl-2-oxoglutarate aldolase, found in Mycobacterium sp. (strain KMS).